We begin with the raw amino-acid sequence, 141 residues long: Large ribosomal subunit protein uL11 (141 aa).

It belongs to the universal ribosomal protein uL11 family. As to quaternary structure, part of the ribosomal stalk of the 50S ribosomal subunit. Interacts with L10 and the large rRNA to form the base of the stalk. L10 forms an elongated spine to which L12 dimers bind in a sequential fashion forming a multimeric L10(L12)X complex. Post-translationally, one or more lysine residues are methylated.

Functionally, forms part of the ribosomal stalk which helps the ribosome interact with GTP-bound translation factors. The polypeptide is Large ribosomal subunit protein uL11 (Geobacter sulfurreducens (strain ATCC 51573 / DSM 12127 / PCA)).